Reading from the N-terminus, the 1548-residue chain is Multidrug resistance protein (1548 aa).

At 1 to 238 (MVDNGHVTIA…YHVWAQILPK (238 aa)) the chain is on the cytoplasmic side. One can recognise an ABC transmembrane type-1 1 domain in the interval 231–514 (VWAQILPKLL…IPIIISSILQ (284 aa)). A helical transmembrane segment spans residues 239 to 256 (LLSDVTALMLPVLLEYFV). N-linked (GlcNAc...) asparagine glycosylation occurs at Asn-263. The next 5 membrane-spanning stretches (helical) occupy residues 266 to 287 (WGWGLGLALTIFLTNVIQSCSA), 349 to 367 (VMYFWSAPLQLVLCLLLLI), 375 to 392 (VPGMAVLFVTLPLQAVIS), 463 to 480 (ATPTLVIAVVFILYHVSG), and 500 to 519 (VSFFMIPIIISSILQCFVSA). Topologically, residues 520–932 (KRVTAFIECP…PWSTYVAYLK (413 aa)) are cytoplasmic. In terms of domain architecture, ABC transporter 1 spans 634 to 855 (VEEGDREYYQ…ALEETLRGEL (222 aa)). Position 667 to 674 (667 to 674 (GSTGSGKS)) interacts with ATP. 4 helical membrane-spanning segments follow: residues 933-950 (SCGGLEAWGCLLATFALT), 975-993 (TYLYVYLFIVFLEIFGSPL), 1051-1070 (GYLYLLEYFFSMCSTVIIMV), and 1072-1088 (VQPFVLVAIVPCVYSYY). Residues 940–1221 (WGCLLATFAL…LVRQVAMVEA (282 aa)) form the ABC transmembrane type-1 2 domain. Residues Asn-1095 and Asn-1154 are each glycosylated (N-linked (GlcNAc...) asparagine). Transmembrane regions (helical) follow at residues 1164 to 1182 (LEFLSCVVTFMVAFIGVIG) and 1186 to 1205 (GASSQNIGLISLSLTMSMTL). The Cytoplasmic segment spans residues 1206–1548 (TETLNWLVRQ…RIVQPAVLSD (343 aa)). An ABC transporter 2 domain is found at 1286–1521 (LVLEGVQMRY…HQSMFHSMVE (236 aa)). 1320 to 1327 (GRTGSGKS) contacts ATP.

Belongs to the ABC transporter superfamily. ABCB family. Multidrug resistance exporter (TC 3.A.1.201) subfamily.

The protein resides in the membrane. The enzyme catalyses ATP + H2O + xenobioticSide 1 = ADP + phosphate + xenobioticSide 2.. This Leishmania tarentolae (Sauroleishmania tarentolae) protein is Multidrug resistance protein (PGPA).